The following is a 431-amino-acid chain: Pyroglutamylated RF-amide peptide receptor (431 aa).

At 1–46 the chain is on the extracellular side; the sequence is MQALNITPEQFSRLLRDHNLTREQFIALYRLRPLVYTPELPGRAKL. N-linked (GlcNAc...) asparagine glycosylation is present at Asn19. The helical transmembrane segment at 47–67 threads the bilayer; the sequence is ALVLTGVLIFALALFGNALVF. Topologically, residues 68-81 are cytoplasmic; it reads YVVTRSKAMRTVTN. The helical transmembrane segment at 82–102 threads the bilayer; sequence IFICSLALSDLLITFFCIPVT. Topologically, residues 103-120 are extracellular; it reads MLQNISDNWLGGAFICKM. A helical membrane pass occupies residues 121–141; the sequence is VPFVQSTAVVTEILTMTCIAV. Over 142-162 the chain is Cytoplasmic; it reads ERHQGLVHPFKMKWQYTNRRA. A helical transmembrane segment spans residues 163 to 183; it reads FTMLGVVWLVAVIVGSPMWHV. The Extracellular portion of the chain corresponds to 184–212; it reads QQLEIKYDFLYEKEHICCLEEWTSPVHQK. A helical membrane pass occupies residues 213–233; sequence IYTTFILVILFLLPLMVMLIL. The Cytoplasmic portion of the chain corresponds to 234–271; that stretch reads YSKIGYELWIKKRVGDGSVLRTIHGKEMSKIARKKKRA. The helical transmembrane segment at 272–292 threads the bilayer; that stretch reads VIMMVTVVALFAVCWAPFHVV. Residues 293–311 are Extracellular-facing; it reads HMMIEYSNFEKEYDDVTIK. The helical transmembrane segment at 312–332 threads the bilayer; that stretch reads MIFAIVQIIGFSNSICNPIVY. Residues 333 to 431 are Cytoplasmic-facing; sequence AFMNENFKKN…AENSPLDSGH (99 aa).

The protein belongs to the G-protein coupled receptor 1 family. In terms of tissue distribution, expressed widely in the brain with high levels in the hypothalamus, trigeminal ganglia and vestibular neurons, and moderate levels in the amygdala, cortex, pituitary, hippocampus, thalamus, caudate nucleus and medulla oblongata. In peripheral tissues, expressed at high levels in the retina and at moderate levels in the heart, kidney, testis and thyroid.

It is found in the cell membrane. Its function is as follows. Receptor for the orexigenic neuropeptide QRFP. The activity of this receptor is mediated by G proteins that modulate adenylate cyclase activity and intracellular calcium levels. This Homo sapiens (Human) protein is Pyroglutamylated RF-amide peptide receptor (QRFPR).